The following is a 246-amino-acid chain: Indole-3-glycerol phosphate synthase (246 aa).

Belongs to the TrpC family.

It carries out the reaction 1-(2-carboxyphenylamino)-1-deoxy-D-ribulose 5-phosphate + H(+) = (1S,2R)-1-C-(indol-3-yl)glycerol 3-phosphate + CO2 + H2O. It participates in amino-acid biosynthesis; L-tryptophan biosynthesis; L-tryptophan from chorismate: step 4/5. The sequence is that of Indole-3-glycerol phosphate synthase from Sulfurisphaera tokodaii (strain DSM 16993 / JCM 10545 / NBRC 100140 / 7) (Sulfolobus tokodaii).